Here is a 600-residue protein sequence, read N- to C-terminus: Protein GPR107 (600 aa).

The first 39 residues, 1-39 (MAALAPVGSPASRGPRLAAGLRLLPMLGLLQLLAEPGLG), serve as a signal peptide directing secretion. Over 40–263 (RVHHLALKDD…YLSAGEIPLP (224 aa)) the chain is Extracellular. N-linked (GlcNAc...) asparagine glycans are attached at residues asparagine 70 and asparagine 169. A disulfide bridge links cysteine 109 with cysteine 228. The segment covering 157–175 (SQEPNVNPASAGNQTQKTQ) has biased composition (polar residues). The segment at 157–185 (SQEPNVNPASAGNQTQKTQDGGKSKRSTV) is disordered. The segment covering 176-185 (DGGKSKRSTV) has biased composition (basic and acidic residues). N-linked (GlcNAc...) asparagine glycosylation occurs at asparagine 211. A helical transmembrane segment spans residues 264-284 (KLYISMAFFFFLSGTIWIHIL). At 285 to 293 (RKRRNDVFK) the chain is on the cytoplasmic side. The chain crosses the membrane as a helical span at residues 294 to 314 (IHWLMAALPFTKSLSLVFHAI). The Extracellular segment spans residues 315 to 337 (DYHYISSQGFPIEGWAVVYYITH). Residues 338–358 (LLKGALLFITIALIGTGWAFI) traverse the membrane as a helical segment. Over 359–368 (KHILSDKDKK) the chain is Cytoplasmic. The chain crosses the membrane as a helical span at residues 369–389 (IFMIVIPLQVLANVAYIIIES). The Extracellular portion of the chain corresponds to 390 to 402 (TEEGTTEYGLWKD). The helical transmembrane segment at 403-423 (SLFLVDLLCCGAILFPVVWSI) threads the bilayer. At 424 to 498 (RHLQEASATD…AKLKLFRHYY (75 aa)) the chain is on the cytoplasmic side. Residues 499–519 (VLIVCYIYFTRIIAFLLKLAV) form a helical membrane-spanning segment. The Extracellular segment spans residues 520–524 (PFQWK). A helical membrane pass occupies residues 525–544 (WLYQLLDETATLVFFVLTGY). At 545-600 (KFRPASDNPYLQLSQEEEDLEMESVVTTSGVMESMKKVKKVTNGSVEPQGEWEGAV) the chain is on the cytoplasmic side.

The protein belongs to the LU7TM family. Cleaved by FURIN to yield two fragments of 17 and 35 kDa that remain associated via a disulfide bond.

It localises to the cell membrane. It is found in the golgi apparatus. Its subcellular location is the trans-Golgi network membrane. In terms of biological role, has been proposed to act as a receptor for neuronostatin, a peptide derived from the somatostatin/SST precursor. Involved in blood sugar regulation through the induction of glucagon in response to low glucose. (Microbial infection) Required for intoxication by Pseudomonas aeruginosa exotoxin A and Campylobacter jejuni CDT. May contribute to the retrograde transport of bacterial toxins, including cholera toxin, from the trans-Golgi network to the endoplasmic reticulum. This is Protein GPR107 (GPR107) from Homo sapiens (Human).